A 60-amino-acid chain; its full sequence is MAVQQNKKSRSARDMRRSHDALEASTLSVEKTTGEIHLRHHVSPEGVYRGRKVIDKGADE.

The tract at residues methionine 1 to serine 28 is disordered. Positions serine 11 to leucine 22 are enriched in basic and acidic residues.

This sequence belongs to the bacterial ribosomal protein bL32 family.

The chain is Large ribosomal subunit protein bL32 from Pseudomonas savastanoi pv. phaseolicola (strain 1448A / Race 6) (Pseudomonas syringae pv. phaseolicola (strain 1448A / Race 6)).